Here is a 604-residue protein sequence, read N- to C-terminus: Glutamine--fructose-6-phosphate aminotransferase [isomerizing] (604 aa).

Residue cysteine 2 is the Nucleophile; for GATase activity of the active site. The 217-residue stretch at 2–218 (CGIVGVVGNR…DKELVILTKD (217 aa)) folds into the Glutamine amidotransferase type-2 domain. SIS domains lie at 284–423 (IVKT…ANGK) and 456–594 (VEKL…VDKP). Lysine 599 (for Fru-6P isomerization activity) is an active-site residue.

As to quaternary structure, homodimer.

The protein resides in the cytoplasm. It carries out the reaction D-fructose 6-phosphate + L-glutamine = D-glucosamine 6-phosphate + L-glutamate. In terms of biological role, catalyzes the first step in hexosamine metabolism, converting fructose-6P into glucosamine-6P using glutamine as a nitrogen source. The polypeptide is Glutamine--fructose-6-phosphate aminotransferase [isomerizing] (Streptococcus pyogenes serotype M6 (strain ATCC BAA-946 / MGAS10394)).